The following is a 511-amino-acid chain: NADH-quinone oxidoreductase subunit N 1 (511 aa).

The next 14 membrane-spanning stretches (helical) occupy residues 15-35 (LALPMLVLSGFAVAILLLDLV), 46-66 (ALALAGLAAATMSLAKVWQAV), 89-109 (FAIYFYLLFIVGAAVAILMSI), 120-140 (GEYHALILFATIGMMCMASGM), 142-162 (LILLFVGLELMALSTYVLVGF), 177-197 (LLLGAFSSGIFAYGLSLFYGL), 221-241 (PIALLALITTATGLLFKIAAV), 264-284 (VAVKAAGWAMLLRIFLFMLWP), 289-309 (YTPILIFVAVATMIGGNFAAL), 317-337 (LLAYSSISHVGYMLLGLVASD), 347-367 (GILVYLAVYTFMNLGAFAVIT), 393-413 (AVLLLVFLLSLAGIPPLAGFW), 426-446 (GHYTLAVVAVLFAVLGMYYYL), and 471-491 (AALWISALGTLGIGLFPEVFL).

Belongs to the complex I subunit 2 family. As to quaternary structure, NDH-1 is composed of 14 different subunits. Subunits NuoA, H, J, K, L, M, N constitute the membrane sector of the complex.

Its subcellular location is the cell inner membrane. It carries out the reaction a quinone + NADH + 5 H(+)(in) = a quinol + NAD(+) + 4 H(+)(out). NDH-1 shuttles electrons from NADH, via FMN and iron-sulfur (Fe-S) centers, to quinones in the respiratory chain. The immediate electron acceptor for the enzyme in this species is believed to be ubiquinone. Couples the redox reaction to proton translocation (for every two electrons transferred, four hydrogen ions are translocated across the cytoplasmic membrane), and thus conserves the redox energy in a proton gradient. This chain is NADH-quinone oxidoreductase subunit N 1, found in Koribacter versatilis (strain Ellin345).